Reading from the N-terminus, the 259-residue chain is Phosphate import ATP-binding protein PstB (259 aa).

Residues 13 to 254 (IQVRDLNFYY…PAQRQTEDYI (242 aa)) enclose the ABC transporter domain. 45–52 (GPSGCGKS) is a binding site for ATP.

The protein belongs to the ABC transporter superfamily. Phosphate importer (TC 3.A.1.7) family. The complex is composed of two ATP-binding proteins (PstB), two transmembrane proteins (PstC and PstA) and a solute-binding protein (PstS).

It localises to the cell inner membrane. It catalyses the reaction phosphate(out) + ATP + H2O = ADP + 2 phosphate(in) + H(+). Its function is as follows. Part of the ABC transporter complex PstSACB involved in phosphate import. Responsible for energy coupling to the transport system. The polypeptide is Phosphate import ATP-binding protein PstB (Edwardsiella tarda).